A 145-amino-acid chain; its full sequence is Aminoglycoside N(6')-acetyltransferase type 1 (145 aa).

The 145-residue stretch at 1 to 145 (MNIKPASEAS…KVVYFSKKID (145 aa)) folds into the N-acetyltransferase domain. Residues tryptophan 22, tyrosine 65, and glutamate 78 each contribute to the substrate site. 80–82 (IYV) serves as a coordination point for acetyl-CoA. Aspartate 114 is a binding site for substrate. Asparagine 119 lines the acetyl-CoA pocket. Glutamate 135 lines the substrate pocket.

Homodimer.

The enzyme catalyses kanamycin B + acetyl-CoA = N(6')-acetylkanamycin B + CoA + H(+). Its function is as follows. Catalyzes the transfer of an acetyl group from acetyl-CoA to the 6'-amino group of aminoglycoside molecules conferring resistance to antibiotics containing the purpurosamine ring including amikacin, kanamycin, tobramycin and netilmicin. This Acinetobacter haemolyticus protein is Aminoglycoside N(6')-acetyltransferase type 1.